Consider the following 528-residue polypeptide: Ecdysteroid UDP-glucosyltransferase (528 aa).

The signal sequence occupies residues 1 to 32; it reads MGHLHIVHWRLTMNGAIAALFLCLVMVHQQHA.

It belongs to the UDP-glycosyltransferase family.

Catalyzes the transfer of glucose from UDP-glucose to ecdysteroids which are insect molting hormones. Expression of egt interferes with normal insect development and block molting. This is Ecdysteroid UDP-glucosyltransferase (EGT) from Mamestra brassicae nuclear polyhedrosis virus (MbNPV).